A 316-amino-acid polypeptide reads, in one-letter code: MQIAKNEMKIFSGNANRELAIKVSEYIGTRLADCEVGRFADGEINVKIGETVRGHDTFIIQPTCPPVNENLMELLIMIDALKRASANSIAVVIPYYGYARQDRKAKGRDPITAKLVANLLTVAGATRVMTVDLHSEQIQGFFDIPLDNLWSFPIFAKKLKEDKIVDDDYVIVSPDVGGVKRARQFAERLGGPLAILDKRRPKDNVAEILNIIGEVEGKTAIIVDDIADTARSLVNAAKAIKEKGAKRVIACITHPVLSDGAIERIQNSEIEKIYISDSISHSNLPDKFSVVSLAPLLGEAIVRVRKNLSISILFRQ.

ATP contacts are provided by residues 41–43 (DGE) and 100–101 (RQ). The Mg(2+) site is built by histidine 134 and aspartate 175. Residue lysine 198 is part of the active site. Residues arginine 200, aspartate 224, and 228-232 (DTARS) each bind D-ribose 5-phosphate.

It belongs to the ribose-phosphate pyrophosphokinase family. Class I subfamily. In terms of assembly, homohexamer. The cofactor is Mg(2+).

It is found in the cytoplasm. It catalyses the reaction D-ribose 5-phosphate + ATP = 5-phospho-alpha-D-ribose 1-diphosphate + AMP + H(+). The protein operates within metabolic intermediate biosynthesis; 5-phospho-alpha-D-ribose 1-diphosphate biosynthesis; 5-phospho-alpha-D-ribose 1-diphosphate from D-ribose 5-phosphate (route I): step 1/1. Functionally, involved in the biosynthesis of the central metabolite phospho-alpha-D-ribosyl-1-pyrophosphate (PRPP) via the transfer of pyrophosphoryl group from ATP to 1-hydroxyl of ribose-5-phosphate (Rib-5-P). The polypeptide is Ribose-phosphate pyrophosphokinase (Thermosipho africanus (strain TCF52B)).